A 117-amino-acid chain; its full sequence is Nitrogen regulatory protein GlnK1 (117 aa).

Residues Thr-32, 40–42, and 92–95 contribute to the ADP site; these read GAQ and GSGK. ATP-binding positions include Thr-32, 40-42, and 92-95; these read GAQ and GSGK.

Belongs to the P(II) protein family. In terms of assembly, homotrimer. Interacts and forms stable complexes with the glutamine synthetase GlnA1.

It localises to the cytoplasm. With respect to regulation, inhibitory effects on GlnA1 are abolished in the presence of the effector 2-oxoglutarate. In terms of biological role, involved in the regulation of nitrogen metabolism. Regulates the activity of its targets by protein-protein interaction in response to the nitrogen status of the cell. Allows finetuning control of the glutamine synthetase GlnA1 under changing nitrogen availabilities via direct protein interaction. The sequence is that of Nitrogen regulatory protein GlnK1 from Methanosarcina mazei (strain ATCC BAA-159 / DSM 3647 / Goe1 / Go1 / JCM 11833 / OCM 88) (Methanosarcina frisia).